The following is a 119-amino-acid chain: Large ribosomal subunit protein uL18 (119 aa).

The protein belongs to the universal ribosomal protein uL18 family. Part of the 50S ribosomal subunit; part of the 5S rRNA/L5/L18/L25 subcomplex. Contacts the 5S and 23S rRNAs.

In terms of biological role, this is one of the proteins that bind and probably mediate the attachment of the 5S RNA into the large ribosomal subunit, where it forms part of the central protuberance. The polypeptide is Large ribosomal subunit protein uL18 (Paracoccus denitrificans (strain Pd 1222)).